The following is a 391-amino-acid chain: ATP-sensitive inward rectifier potassium channel 1 (391 aa).

The Cytoplasmic portion of the chain corresponds to 1–77; the sequence is MGASERSVFR…IWTTVLDLKW (77 aa). Ser-44 carries the phosphoserine; by SGK1 modification. The chain crosses the membrane as a helical span at residues 78-102; it reads RYKMTVFITAFLGSWFLFGLLWYVV. Residues 103–127 lie on the Extracellular side of the membrane; sequence AYVHKDLPEFYPPDNRTPCVENING. Asn-117 is a glycosylation site (N-linked (GlcNAc...) asparagine). Positions 128–139 form an intramembrane region, helical; Pore-forming; it reads MTSAFLFSLETQ. The pore-forming intramembrane region spans 140 to 146; it reads VTIGYGF. A Selectivity filter motif is present at residues 141–146; the sequence is TIGYGF. Over 147-155 the chain is Extracellular; it reads RFVTEQCAT. The helical transmembrane segment at 156–177 threads the bilayer; that stretch reads AIFLLIFQSILGVIINSFMCGA. The Cytoplasmic portion of the chain corresponds to 178–391; it reads ILAKISRPKK…EVDETDDTQM (214 aa). A polyphosphoinositide (PIP2)-binding region spans residues 180 to 207; that stretch reads AKISRPKKRAKTITFSKNAVISKRGGKL. 223 to 230 provides a ligand contact to ATP; it reads GSHIYGKL.

The protein belongs to the inward rectifier-type potassium channel (TC 1.A.2.1) family. KCNJ1 subfamily. In terms of assembly, interacts with SGK1 and SLC9A3R2/NHERF2. In terms of processing, phosphorylation at Ser-44 by SGK1 is necessary for its expression at the cell membrane. In terms of tissue distribution, mainly in kidney (renal cortex, medulla and papilla). As to expression, kidney.

The protein localises to the cell membrane. It catalyses the reaction K(+)(in) = K(+)(out). With respect to regulation, inhibited by WNK3. Activated by phosphatidylinositol 4,5 biphosphate (PtdIns(4,5)P2). Functionally, inward rectifier potassium channels are characterized by a greater tendency to allow potassium to flow into the cell rather than out of it. Their voltage dependence is regulated by the concentration of extracellular potassium; as external potassium is raised, the voltage range of the channel opening shifts to more positive voltages. The inward rectification is mainly due to the blockage of outward current by internal magnesium. This channel is activated by internal ATP and can be blocked by external barium. In the kidney, probably plays a major role in potassium homeostasis. Its function is as follows. Inward rectifier potassium channels are characterized by a greater tendency to allow potassium to flow into the cell rather than out of it. Their voltage dependence is regulated by the concentration of extracellular potassium; as external potassium is raised, the voltage range of the channel opening shifts to more positive voltages. The polypeptide is ATP-sensitive inward rectifier potassium channel 1 (Kcnj1) (Rattus norvegicus (Rat)).